The sequence spans 510 residues: NAD(P)H-quinone oxidoreductase subunit 2, chloroplastic (510 aa).

A run of 13 helical transmembrane segments spans residues 28–48, 57–77, 99–119, 124–144, 149–169, 183–203, 227–247, 295–315, 323–343, 354–374, 395–415, 418–438, and 484–504; these read DGSF…LLII, IPWL…TLLF, IFQF…VEYI, MALT…MFLC, LITI…LSGY, YLLM…WLYG, PGIS…LSPA, WHLL…LIAI, MLAY…IVGD, YMLF…LFGL, ALSL…AGFF, LYLF…IGLL, and MIVC…IIAI.

It belongs to the complex I subunit 2 family. NDH is composed of at least 16 different subunits, 5 of which are encoded in the nucleus.

The protein resides in the plastid. It is found in the chloroplast thylakoid membrane. It carries out the reaction a plastoquinone + NADH + (n+1) H(+)(in) = a plastoquinol + NAD(+) + n H(+)(out). It catalyses the reaction a plastoquinone + NADPH + (n+1) H(+)(in) = a plastoquinol + NADP(+) + n H(+)(out). In terms of biological role, NDH shuttles electrons from NAD(P)H:plastoquinone, via FMN and iron-sulfur (Fe-S) centers, to quinones in the photosynthetic chain and possibly in a chloroplast respiratory chain. The immediate electron acceptor for the enzyme in this species is believed to be plastoquinone. Couples the redox reaction to proton translocation, and thus conserves the redox energy in a proton gradient. In Silene latifolia (White campion), this protein is NAD(P)H-quinone oxidoreductase subunit 2, chloroplastic.